Reading from the N-terminus, the 217-residue chain is Somatotropin (217 aa).

An N-terminal signal peptide occupies residues 1 to 27 (MMAAGPRTSLLLAFALLCLPWTQMVGA). Residue His-46 coordinates Zn(2+). Cys-79 and Cys-190 are joined by a disulfide. At Ser-132 the chain carries Phosphoserine. Glu-199 lines the Zn(2+) pocket. The cysteines at positions 207 and 215 are disulfide-linked.

It belongs to the somatotropin/prolactin family.

The protein resides in the secreted. Functionally, plays an important role in growth control. Its major role in stimulating body growth is to stimulate the liver and other tissues to secrete IGF1. It stimulates both the differentiation and proliferation of myoblasts. It also stimulates amino acid uptake and protein synthesis in muscle and other tissues. This is Somatotropin (GH1) from Giraffa camelopardalis (Giraffe).